We begin with the raw amino-acid sequence, 410 residues long: Pyrophosphate--fructose 6-phosphate 1-phosphotransferase (410 aa).

G12 is a diphosphate binding site. A Mg(2+)-binding site is contributed by D121. Substrate is bound by residues 149 to 151 (TID), 194 to 196 (MGR), E266, and 323 to 326 (YFSR). The Proton acceptor role is filled by D151.

Belongs to the phosphofructokinase type A (PFKA) family. PPi-dependent PFK group II subfamily. Clade 'P' sub-subfamily. As to quaternary structure, homodimer or homotetramer. Mg(2+) serves as cofactor.

It is found in the cytoplasm. It carries out the reaction beta-D-fructose 6-phosphate + diphosphate = beta-D-fructose 1,6-bisphosphate + phosphate + H(+). The protein operates within carbohydrate degradation; glycolysis; D-glyceraldehyde 3-phosphate and glycerone phosphate from D-glucose: step 3/4. With respect to regulation, non-allosteric. In terms of biological role, catalyzes the phosphorylation of D-fructose 6-phosphate, the first committing step of glycolysis. Uses inorganic phosphate (PPi) as phosphoryl donor instead of ATP like common ATP-dependent phosphofructokinases (ATP-PFKs), which renders the reaction reversible, and can thus function both in glycolysis and gluconeogenesis. Consistently, PPi-PFK can replace the enzymes of both the forward (ATP-PFK) and reverse (fructose-bisphosphatase (FBPase)) reactions. The chain is Pyrophosphate--fructose 6-phosphate 1-phosphotransferase from Mastigamoeba balamuthi (Phreatamoeba balamuthi).